The chain runs to 247 residues: Ribosomal RNA processing protein 36 homolog (247 aa).

Disordered regions lie at residues 1–29 (MDNQLSDSSDDESPTDDCSDEGEVEHLKD), 62–89 (RTQGIPDLETKKKKNKGPQELSSKQRVP), 136–188 (SVEK…RELV), and 218–247 (GKLQKYLTKRRKKTASKDRRHVPERRQVDQ). Over residues 8–23 (SSDDESPTDDCSDEGE) the composition is skewed to acidic residues. Basic and acidic residues-rich tracts occupy residues 136-153 (SVEKELKKTKNAEKRKNL) and 164-174 (ERSRKSAEAKR). Basic residues predominate over residues 218 to 240 (GKLQKYLTKRRKKTASKDRRHVP).

It belongs to the RRP36 family.

It localises to the nucleus. The protein resides in the nucleolus. In terms of biological role, involved in the early processing steps of the pre-rRNA in the maturation pathway leading to the 18S rRNA. The sequence is that of Ribosomal RNA processing protein 36 homolog from Nematostella vectensis (Starlet sea anemone).